A 139-amino-acid polypeptide reads, in one-letter code: S-protein homolog 14 (139 aa).

The N-terminal stretch at 1–20 (MNRFIIFMFVVVTYFGLNVA) is a signal peptide. Residue Asn136 is glycosylated (N-linked (GlcNAc...) asparagine).

The protein belongs to the plant self-incompatibility (S1) protein family.

The protein resides in the secreted. The chain is S-protein homolog 14 from Arabidopsis thaliana (Mouse-ear cress).